Here is a 426-residue protein sequence, read N- to C-terminus: Transcription termination factor Rho (426 aa).

Positions 58–131 (QSLARGYLDI…VRVEAVNGLD (74 aa)) constitute a Rho RNA-BD domain. ATP is bound by residues 176-181 (GRGQRA), 188-193 (KAGKTT), and arginine 219.

The protein belongs to the Rho family. In terms of assembly, homohexamer. The homohexamer assembles into an open ring structure.

In terms of biological role, facilitates transcription termination by a mechanism that involves Rho binding to the nascent RNA, activation of Rho's RNA-dependent ATPase activity, and release of the mRNA from the DNA template. The chain is Transcription termination factor Rho from Deinococcus radiodurans (strain ATCC 13939 / DSM 20539 / JCM 16871 / CCUG 27074 / LMG 4051 / NBRC 15346 / NCIMB 9279 / VKM B-1422 / R1).